A 166-amino-acid chain; its full sequence is NAD(P)H-quinone oxidoreductase subunit I, chloroplastic (166 aa).

4Fe-4S ferredoxin-type domains lie at 55 to 84 (GRIH…VDWK) and 95 to 124 (LNYS…MTEE). [4Fe-4S] cluster is bound by residues cysteine 64, cysteine 67, cysteine 70, cysteine 74, cysteine 104, cysteine 107, cysteine 110, and cysteine 114.

The protein belongs to the complex I 23 kDa subunit family. In terms of assembly, NDH is composed of at least 16 different subunits, 5 of which are encoded in the nucleus. [4Fe-4S] cluster is required as a cofactor.

It is found in the plastid. The protein localises to the chloroplast thylakoid membrane. The enzyme catalyses a plastoquinone + NADH + (n+1) H(+)(in) = a plastoquinol + NAD(+) + n H(+)(out). It catalyses the reaction a plastoquinone + NADPH + (n+1) H(+)(in) = a plastoquinol + NADP(+) + n H(+)(out). In terms of biological role, NDH shuttles electrons from NAD(P)H:plastoquinone, via FMN and iron-sulfur (Fe-S) centers, to quinones in the photosynthetic chain and possibly in a chloroplast respiratory chain. The immediate electron acceptor for the enzyme in this species is believed to be plastoquinone. Couples the redox reaction to proton translocation, and thus conserves the redox energy in a proton gradient. The sequence is that of NAD(P)H-quinone oxidoreductase subunit I, chloroplastic from Tridax balbisioides (Coatbuttons).